The primary structure comprises 702 residues: MA3 DOMAIN-CONTAINING TRANSLATION REGULATORY FACTOR 3 (702 aa).

The segment at 1–100 is disordered; it reads MEGFLTDQQR…PNDPNYDSGE (100 aa). Over residues 53–65 the composition is skewed to basic residues; it reads VKHRRSHAGRSIR. Over residues 81–91 the composition is skewed to basic and acidic residues; sequence IDTDGDYHIDP. One can recognise an MI 1 domain in the interval 116 to 237; sequence DYKKAAASII…PPAFLPRAAK (122 aa). The Nuclear localization signal 1 motif lies at 267 to 274; sequence ERRWGGQT. MI domains follow at residues 280 to 401, 414 to 535, and 577 to 697; these read EVKK…PSGE, RFKE…EISS, and DAKD…SLTE. Positions 615–622 match the Nuclear localization signal 2 motif; sequence VKKALVMG.

It belongs to the PDCD4 family. As to quaternary structure, interacts with EIN2, ETR2 and EIN4. Binds to EIF4A1. The association with ribosomes is modulated by cellular energy status and TOR activity. Mostly expressed in vegetative tissues, such as leaves and stems, and, to a lower extent, in roots and reproductive tissues, such as flower buds and flowers. Expressed in seedlings, roots, cauline leaf tips and flowers.

The protein resides in the nucleus. It is found in the cytoplasm. Its subcellular location is the cytosol. In terms of biological role, involved in target of rapamycin (TOR)-regulated translation control, especially under energy-deficient conditions. Involved in the regulation of the ethylene-mediated signaling pathway. Involved in salt stress responses. Reduced cotyledons size and early flowering. The protein is MA3 DOMAIN-CONTAINING TRANSLATION REGULATORY FACTOR 3 of Arabidopsis thaliana (Mouse-ear cress).